The primary structure comprises 572 residues: Hemagglutinin-neuraminidase (572 aa).

Residues 1-31 (MEYWKHTNHGKDAGNELETSMATHGNKLTNK) are Intravirion-facing. A helical transmembrane segment spans residues 32-52 (IIYILWTIILVLLSIVFIIVL). Over 53-572 (INSIKSEKAH…FKTEIPKSCS (520 aa)) the chain is Virion surface. 2 disulfides stabilise this stretch: cysteine 190–cysteine 214 and cysteine 256–cysteine 269. Residues 252–257 (NRKSCS) are involved in neuraminidase activity. Residues asparagine 308 and asparagine 351 are each glycosylated (N-linked (GlcNAc...) asparagine; by host). Disulfide bonds link cysteine 355–cysteine 469 and cysteine 463–cysteine 473. Asparagine 523 is a glycosylation site (N-linked (GlcNAc...) asparagine; by host). A disulfide bridge links cysteine 535 with cysteine 544.

It belongs to the paramyxoviruses hemagglutinin-neuraminidase family. Homotetramer; composed of disulfide-linked homodimers. Interacts with F protein trimer.

It is found in the virion membrane. It localises to the host cell membrane. It catalyses the reaction Hydrolysis of alpha-(2-&gt;3)-, alpha-(2-&gt;6)-, alpha-(2-&gt;8)- glycosidic linkages of terminal sialic acid residues in oligosaccharides, glycoproteins, glycolipids, colominic acid and synthetic substrates.. Attaches the virus to sialic acid-containing cell receptors and thereby initiating infection. Binding of HN protein to the receptor induces a conformational change that allows the F protein to trigger virion/cell membranes fusion. Its function is as follows. Neuraminidase activity ensures the efficient spread of the virus by dissociating the mature virions from the neuraminic acid containing glycoproteins. This chain is Hemagglutinin-neuraminidase (HN), found in Homo sapiens (Human).